A 243-amino-acid chain; its full sequence is GTP cyclohydrolase 1 type 2 (243 aa).

A divalent metal cation-binding residues include His-63, His-64, Asp-102, His-209, and Glu-213.

Belongs to the GTP cyclohydrolase I type 2/NIF3 family. Homohexamer.

The catalysed reaction is GTP + H2O = 7,8-dihydroneopterin 3'-triphosphate + formate + H(+). It participates in cofactor biosynthesis; 7,8-dihydroneopterin triphosphate biosynthesis; 7,8-dihydroneopterin triphosphate from GTP: step 1/1. Its function is as follows. Converts GTP to dihydroneopterin triphosphate. Is not active with GDP, GMP, ATP, CTP or UTP as substrate. This Helicobacter pylori (strain ATCC 700392 / 26695) (Campylobacter pylori) protein is GTP cyclohydrolase 1 type 2.